A 372-amino-acid chain; its full sequence is tRNA-specific 2-thiouridylase MnmA (372 aa).

Residues 11 to 18 (GMSGGVDS) and Met-37 each bind ATP. Positions 97-99 (NPD) are interaction with target base in tRNA. Cys-102 serves as the catalytic Nucleophile. An intrachain disulfide couples Cys-102 to Cys-199. ATP is bound at residue Gly-126. The segment at 149–151 (KDQ) is interaction with tRNA. Cys-199 functions as the Cysteine persulfide intermediate in the catalytic mechanism. The interaction with tRNA stretch occupies residues 309-310 (RY).

It belongs to the MnmA/TRMU family.

The protein resides in the cytoplasm. The catalysed reaction is S-sulfanyl-L-cysteinyl-[protein] + uridine(34) in tRNA + AH2 + ATP = 2-thiouridine(34) in tRNA + L-cysteinyl-[protein] + A + AMP + diphosphate + H(+). Catalyzes the 2-thiolation of uridine at the wobble position (U34) of tRNA, leading to the formation of s(2)U34. The sequence is that of tRNA-specific 2-thiouridylase MnmA from Staphylococcus aureus (strain USA300).